We begin with the raw amino-acid sequence, 273 residues long: Salivary glue protein Sgs-3 (273 aa).

Positions 1–23 (MKLTIAISLASILLLSVAHVAQG) are cleaved as a signal peptide. A compositionally biased stretch (low complexity) spans 47 to 57 (TTTTTTTTCAP). Residues 47-225 (TTTTTTTTCA…TPKPTNKPGC (179 aa)) form a disordered region. The span at 58 to 67 (PTRPPPPPCT) shows a compositional bias: pro residues. The span at 83-225 (RRTTTTTRQT…TPKPTNKPGC (143 aa)) shows a compositional bias: low complexity.

This Drosophila yakuba (Fruit fly) protein is Salivary glue protein Sgs-3 (Sgs3).